The chain runs to 199 residues: NAD(P)H dehydrogenase (quinone) (199 aa).

Residues 4–190 (VLVLYYSTYG…DGARFLGQHV (187 aa)) form the Flavodoxin-like domain. FMN is bound by residues 10 to 15 (STYGHI) and 78 to 80 (TRF). Tyr12 lines the NAD(+) pocket. Trp98 is a binding site for substrate. Residues 113 to 119 (STATQHG) and His134 each bind FMN.

This sequence belongs to the WrbA family. FMN is required as a cofactor.

The catalysed reaction is a quinone + NADH + H(+) = a quinol + NAD(+). The enzyme catalyses a quinone + NADPH + H(+) = a quinol + NADP(+). This is NAD(P)H dehydrogenase (quinone) from Gluconacetobacter diazotrophicus (strain ATCC 49037 / DSM 5601 / CCUG 37298 / CIP 103539 / LMG 7603 / PAl5).